Consider the following 162-residue polypeptide: NADH-quinone oxidoreductase subunit I (162 aa).

2 4Fe-4S ferredoxin-type domains span residues 52-82 and 93-122; these read LRRY…IEAG and TRYD…EGPN. Positions 62, 65, 68, 72, 102, 105, 108, and 112 each coordinate [4Fe-4S] cluster.

Belongs to the complex I 23 kDa subunit family. As to quaternary structure, NDH-1 is composed of 14 different subunits. Subunits NuoA, H, J, K, L, M, N constitute the membrane sector of the complex. It depends on [4Fe-4S] cluster as a cofactor.

The protein localises to the cell inner membrane. It catalyses the reaction a quinone + NADH + 5 H(+)(in) = a quinol + NAD(+) + 4 H(+)(out). Its function is as follows. NDH-1 shuttles electrons from NADH, via FMN and iron-sulfur (Fe-S) centers, to quinones in the respiratory chain. The immediate electron acceptor for the enzyme in this species is believed to be ubiquinone. Couples the redox reaction to proton translocation (for every two electrons transferred, four hydrogen ions are translocated across the cytoplasmic membrane), and thus conserves the redox energy in a proton gradient. This is NADH-quinone oxidoreductase subunit I from Beijerinckia indica subsp. indica (strain ATCC 9039 / DSM 1715 / NCIMB 8712).